Consider the following 88-residue polypeptide: Putative membrane protein insertion efficiency factor (88 aa).

Positions 68-88 (VPPPNSDTRARGEADARSHRL) are disordered. Basic and acidic residues predominate over residues 75–88 (TRARGEADARSHRL).

This sequence belongs to the UPF0161 family.

The protein localises to the cell inner membrane. In terms of biological role, could be involved in insertion of integral membrane proteins into the membrane. The protein is Putative membrane protein insertion efficiency factor of Burkholderia orbicola (strain MC0-3).